Here is a 901-residue protein sequence, read N- to C-terminus: Alanine--tRNA ligase (901 aa).

Zn(2+) is bound by residues His-581, His-585, Cys-684, and His-688.

The protein belongs to the class-II aminoacyl-tRNA synthetase family. Zn(2+) is required as a cofactor.

Its subcellular location is the cytoplasm. The enzyme catalyses tRNA(Ala) + L-alanine + ATP = L-alanyl-tRNA(Ala) + AMP + diphosphate. Functionally, catalyzes the attachment of alanine to tRNA(Ala) in a two-step reaction: alanine is first activated by ATP to form Ala-AMP and then transferred to the acceptor end of tRNA(Ala). Also edits incorrectly charged Ser-tRNA(Ala) and Gly-tRNA(Ala) via its editing domain. The protein is Alanine--tRNA ligase of Mycobacterium ulcerans (strain Agy99).